Reading from the N-terminus, the 345-residue chain is Dihydroorotate dehydrogenase (quinone) (345 aa).

FMN contacts are provided by residues 65–69 (AGLDK) and Thr-89. A substrate-binding site is contributed by Lys-69. 114 to 118 (NRMGF) is a substrate binding site. Residues Asn-142 and Asn-175 each contribute to the FMN site. Substrate is bound at residue Asn-175. Ser-178 serves as the catalytic Nucleophile. Asn-180 provides a ligand contact to substrate. FMN-binding residues include Lys-220 and Thr-248. Residue 249–250 (NT) participates in substrate binding. FMN is bound by residues Gly-271, Gly-300, and 321 to 322 (YT).

It belongs to the dihydroorotate dehydrogenase family. Type 2 subfamily. Monomer. FMN is required as a cofactor.

The protein resides in the cell membrane. The catalysed reaction is (S)-dihydroorotate + a quinone = orotate + a quinol. It functions in the pathway pyrimidine metabolism; UMP biosynthesis via de novo pathway; orotate from (S)-dihydroorotate (quinone route): step 1/1. Catalyzes the conversion of dihydroorotate to orotate with quinone as electron acceptor. This Burkholderia thailandensis (strain ATCC 700388 / DSM 13276 / CCUG 48851 / CIP 106301 / E264) protein is Dihydroorotate dehydrogenase (quinone).